The following is a 226-amino-acid chain: ATP synthase F(0) complex subunit a (226 aa).

A run of 6 helical transmembrane segments spans residues 6-26 (FASF…IILF), 68-88 (WSLM…LGLL), 97-117 (QLSM…VMGF), 138-158 (IPML…ALAV), 164-184 (ITAG…LSTI), and 189-209 (TLII…VALI).

Belongs to the ATPase A chain family. Component of the ATP synthase complex composed at least of ATP5F1A/subunit alpha, ATP5F1B/subunit beta, ATP5MC1/subunit c (homooctomer), MT-ATP6/subunit a, MT-ATP8/subunit 8, ATP5ME/subunit e, ATP5MF/subunit f, ATP5MG/subunit g, ATP5MK/subunit k, ATP5MJ/subunit j, ATP5F1C/subunit gamma, ATP5F1D/subunit delta, ATP5F1E/subunit epsilon, ATP5PF/subunit F6, ATP5PB/subunit b, ATP5PD/subunit d, ATP5PO/subunit OSCP. ATP synthase complex consists of a soluble F(1) head domain (subunits alpha(3) and beta(3)) - the catalytic core - and a membrane F(0) domain - the membrane proton channel (subunits c, a, 8, e, f, g, k and j). These two domains are linked by a central stalk (subunits gamma, delta, and epsilon) rotating inside the F1 region and a stationary peripheral stalk (subunits F6, b, d, and OSCP). Interacts with DNAJC30; interaction is direct.

It is found in the mitochondrion inner membrane. The catalysed reaction is H(+)(in) = H(+)(out). In terms of biological role, subunit a, of the mitochondrial membrane ATP synthase complex (F(1)F(0) ATP synthase or Complex V) that produces ATP from ADP in the presence of a proton gradient across the membrane which is generated by electron transport complexes of the respiratory chain. ATP synthase complex consist of a soluble F(1) head domain - the catalytic core - and a membrane F(1) domain - the membrane proton channel. These two domains are linked by a central stalk rotating inside the F(1) region and a stationary peripheral stalk. During catalysis, ATP synthesis in the catalytic domain of F(1) is coupled via a rotary mechanism of the central stalk subunits to proton translocation. With the subunit c (ATP5MC1), forms the proton-conducting channel in the F(0) domain, that contains two crucial half-channels (inlet and outlet) that facilitate proton movement from the mitochondrial intermembrane space (IMS) into the matrix. Protons are taken up via the inlet half-channel and released through the outlet half-channel, following a Grotthuss mechanism. This Pan paniscus (Pygmy chimpanzee) protein is ATP synthase F(0) complex subunit a.